The sequence spans 859 residues: MAAAMVAAVHGVGRQDRSSPGGGGAPQVDTGKYVRYTPEQVEALERVYGECPKPSSLRRQQLIRECPILSNIEPKQIKVWFQNRRCREKQRKEASRLQTVNRKLTAMNKLLMEENDRLQKQVSRLVYENGYMRQQLHNPSVATTDTSCESVVTSGQHHQQQNPAATRPQRDANNPAGLLAIAEETLAEFLSKATGTAVDWVQMVGMKPGPDSIGIIAVSHNCSGVAARACGLVSLEPTKVAEILKDRPSWYRDCRCVDVLHVIPTGNGGTIELIYMQTYAPTTLAAPRDFWILRYTSGLEDGSLVICERSLTQSTGGPSGPNTPNFVRAEVLPSGYLIRPCEGGGSMIHIVDHVDLDAWSVPEVLRPLYESPKILAQKMTIAALRHIRQIAHESSGEMPYGGGRQPAVLRTFSQRLSRGFNDAVNGFPDDGWSLMSSDGAEDVTIAFNSSPNKLVGSHVNSSQLFSAIGGGILCAKASMLLQNVPPALLVRFLREHRSEWADPGVDAYSAAALRASPYAVPGLRAGGFMGSQVILPLAHTLEHEEFLEVIRLEGHSLCHDEVVLSRDMYLLQLCSGVDENAAGACAQLVFAPIDESFADDAPLLPSGFRVIPLDGKTDAPSATRTLDLASTLEVGSGGTTRASSDTSSTCNTRSVLTIAFQFSYENHLRESVAAMARQYVRTVVASVQRVAMAIAPSRLGGQIETKNPPGSPEAHTLARWIGRSYRFHTGADLLRTDSQSMDSSLKAMWQHSDSIMCCSLKAAPVFTFANQAGLDMLETTLIALQDISLEKILDDDGRKALCTEFPKIMQQGFAYLPGGVCVSSMGRPVSYEQAVAWKVLSDDDTPHCLAFMFVNWSFV.

The segment at 7-31 (AAVHGVGRQDRSSPGGGGAPQVDTG) is disordered. Residues 29 to 92 (DTGKYVRYTP…NRRCREKQRK (64 aa)) constitute a DNA-binding region (homeobox). A coiled-coil region spans residues 100 to 129 (VNRKLTAMNKLLMEENDRLQKQVSRLVYEN). Positions 146–164 (TSCESVVTSGQHHQQQNPA) are enriched in polar residues. The disordered stretch occupies residues 146–172 (TSCESVVTSGQHHQQQNPAATRPQRDA). The START domain maps to 171–393 (DANNPAGLLA…LRHIRQIAHE (223 aa)).

The protein belongs to the HD-ZIP homeobox family. Class III subfamily. In terms of tissue distribution, expressed in seedlings, roots, stems, leaf sheaths and blades and panicles.

The protein localises to the nucleus. In terms of biological role, probable transcription factor. The protein is Homeobox-leucine zipper protein HOX32 (HOX32) of Oryza sativa subsp. indica (Rice).